A 409-amino-acid chain; its full sequence is Peptidase T (409 aa).

Position 78 (His78) interacts with Zn(2+). Residue Asp80 is part of the active site. Asp140 serves as a coordination point for Zn(2+). Glu173 serves as the catalytic Proton acceptor. Zn(2+)-binding residues include Glu174, Asp196, and His379.

This sequence belongs to the peptidase M20B family. Zn(2+) is required as a cofactor.

The protein localises to the cytoplasm. The enzyme catalyses Release of the N-terminal residue from a tripeptide.. Cleaves the N-terminal amino acid of tripeptides. This chain is Peptidase T, found in Salmonella paratyphi C (strain RKS4594).